Reading from the N-terminus, the 120-residue chain is uncharacterized protein (120 aa).

A helical membrane pass occupies residues 63 to 83 (IDMSCVICFNFSCHLFVVIFI).

The protein localises to the membrane. This is an uncharacterized protein from Saccharomyces cerevisiae (strain ATCC 204508 / S288c) (Baker's yeast).